A 121-amino-acid polypeptide reads, in one-letter code: MGYKVGNTRVAGDYTHHGKVDGTKIQGLGASVLYDFDTNSKVQPYVGARVATNQFKYTNRAEQKFKSSSDIKLGYGVVAGAKYKLDGNWYANGGVEYNRLGNFDSTKVNNYGAKVGVGYGF.

This sequence belongs to the opacity porin family.

The protein is Protein opa (opa) of Haemophilus influenzae (strain ATCC 51907 / DSM 11121 / KW20 / Rd).